The chain runs to 155 residues: 2-C-methyl-D-erythritol 2,4-cyclodiphosphate synthase (155 aa).

A divalent metal cation is bound by residues Asp8 and His10. 4-CDP-2-C-methyl-D-erythritol 2-phosphate-binding positions include 8-10 (DVH) and 34-35 (HS). His42 lines the a divalent metal cation pocket. Residues 56–58 (DIG), 61–65 (FPDSD), 100–106 (AQKPKML), 132–135 (TTEE), Phe139, and Lys142 each bind 4-CDP-2-C-methyl-D-erythritol 2-phosphate.

Belongs to the IspF family. In terms of assembly, homotrimer. Requires a divalent metal cation as cofactor.

It catalyses the reaction 4-CDP-2-C-methyl-D-erythritol 2-phosphate = 2-C-methyl-D-erythritol 2,4-cyclic diphosphate + CMP. It functions in the pathway isoprenoid biosynthesis; isopentenyl diphosphate biosynthesis via DXP pathway; isopentenyl diphosphate from 1-deoxy-D-xylulose 5-phosphate: step 4/6. In terms of biological role, involved in the biosynthesis of isopentenyl diphosphate (IPP) and dimethylallyl diphosphate (DMAPP), two major building blocks of isoprenoid compounds. Catalyzes the conversion of 4-diphosphocytidyl-2-C-methyl-D-erythritol 2-phosphate (CDP-ME2P) to 2-C-methyl-D-erythritol 2,4-cyclodiphosphate (ME-CPP) with a corresponding release of cytidine 5-monophosphate (CMP). This chain is 2-C-methyl-D-erythritol 2,4-cyclodiphosphate synthase, found in Clostridium botulinum (strain ATCC 19397 / Type A).